The chain runs to 360 residues: Type 2 DNA topoisomerase 6 subunit A (360 aa).

Residues Glu3–Ala140 form the Topo IIA-type catalytic domain. Tyr97 serves as the catalytic O-(5'-phospho-DNA)-tyrosine intermediate. 2 residues coordinate Mg(2+): Glu193 and Asp245.

This sequence belongs to the TOP6A family. In terms of assembly, homodimer. Heterotetramer of two Top6A and two Top6B chains. Mg(2+) is required as a cofactor.

The catalysed reaction is ATP-dependent breakage, passage and rejoining of double-stranded DNA.. Relaxes both positive and negative superturns and exhibits a strong decatenase activity. This Archaeoglobus fulgidus (strain ATCC 49558 / DSM 4304 / JCM 9628 / NBRC 100126 / VC-16) protein is Type 2 DNA topoisomerase 6 subunit A.